A 335-amino-acid polypeptide reads, in one-letter code: Holliday junction branch migration complex subunit RuvB (335 aa).

A large ATPase domain (RuvB-L) region spans residues 1 to 183 (MDERIISSET…FGVIDHLEFY (183 aa)). Residues L22, R23, G64, K67, T68, T69, 130 to 132 (EDY), R173, Y183, and R220 contribute to the ATP site. Position 68 (T68) interacts with Mg(2+). The segment at 184–254 (TEEQLTEIVL…LAKEALTLLQ (71 aa)) is small ATPAse domain (RuvB-S). Residues 257 to 335 (PRGLDTIDQK…HLGISYEKEV (79 aa)) form a head domain (RuvB-H) region. Residues R293, R312, and R317 each coordinate DNA.

The protein belongs to the RuvB family. In terms of assembly, homohexamer. Forms an RuvA(8)-RuvB(12)-Holliday junction (HJ) complex. HJ DNA is sandwiched between 2 RuvA tetramers; dsDNA enters through RuvA and exits via RuvB. An RuvB hexamer assembles on each DNA strand where it exits the tetramer. Each RuvB hexamer is contacted by two RuvA subunits (via domain III) on 2 adjacent RuvB subunits; this complex drives branch migration. In the full resolvosome a probable DNA-RuvA(4)-RuvB(12)-RuvC(2) complex forms which resolves the HJ.

The protein localises to the cytoplasm. The catalysed reaction is ATP + H2O = ADP + phosphate + H(+). The RuvA-RuvB-RuvC complex processes Holliday junction (HJ) DNA during genetic recombination and DNA repair, while the RuvA-RuvB complex plays an important role in the rescue of blocked DNA replication forks via replication fork reversal (RFR). RuvA specifically binds to HJ cruciform DNA, conferring on it an open structure. The RuvB hexamer acts as an ATP-dependent pump, pulling dsDNA into and through the RuvAB complex. RuvB forms 2 homohexamers on either side of HJ DNA bound by 1 or 2 RuvA tetramers; 4 subunits per hexamer contact DNA at a time. Coordinated motions by a converter formed by DNA-disengaged RuvB subunits stimulates ATP hydrolysis and nucleotide exchange. Immobilization of the converter enables RuvB to convert the ATP-contained energy into a lever motion, pulling 2 nucleotides of DNA out of the RuvA tetramer per ATP hydrolyzed, thus driving DNA branch migration. The RuvB motors rotate together with the DNA substrate, which together with the progressing nucleotide cycle form the mechanistic basis for DNA recombination by continuous HJ branch migration. Branch migration allows RuvC to scan DNA until it finds its consensus sequence, where it cleaves and resolves cruciform DNA. The chain is Holliday junction branch migration complex subunit RuvB from Listeria monocytogenes serotype 4a (strain HCC23).